The sequence spans 435 residues: Adenylosuccinate synthetase (435 aa).

GTP-binding positions include 11–17 (GDEGKGK) and 39–41 (GHT). Catalysis depends on Asp12, which acts as the Proton acceptor. Asp12 and Gly39 together coordinate Mg(2+). Residues 12 to 15 (DEGK), 37 to 40 (NAGH), Thr134, Arg148, Asn230, Thr245, and Arg309 each bind IMP. His40 (proton donor) is an active-site residue. Residue 305 to 311 (VTTGRKR) participates in substrate binding. GTP-binding positions include Arg311, 337 to 339 (KLD), and 419 to 421 (GTG).

The protein belongs to the adenylosuccinate synthetase family. As to quaternary structure, homodimer. The cofactor is Mg(2+).

Its subcellular location is the cytoplasm. It carries out the reaction IMP + L-aspartate + GTP = N(6)-(1,2-dicarboxyethyl)-AMP + GDP + phosphate + 2 H(+). It functions in the pathway purine metabolism; AMP biosynthesis via de novo pathway; AMP from IMP: step 1/2. Functionally, plays an important role in the de novo pathway and in the salvage pathway of purine nucleotide biosynthesis. Catalyzes the first committed step in the biosynthesis of AMP from IMP. The protein is Adenylosuccinate synthetase of Zygosaccharomyces rouxii (strain ATCC 2623 / CBS 732 / NBRC 1130 / NCYC 568 / NRRL Y-229).